Reading from the N-terminus, the 88-residue chain is Small ribosomal subunit protein bS16c (88 aa).

This sequence belongs to the bacterial ribosomal protein bS16 family.

Its subcellular location is the plastid. It localises to the chloroplast. The sequence is that of Small ribosomal subunit protein bS16c from Citrus sinensis (Sweet orange).